The following is a 414-amino-acid chain: Serine/arginine (SR)-type shuttling mRNA binding protein NPL3 (414 aa).

The segment covering 1-11 has biased composition (basic and acidic residues); that stretch reads MSEAQETHVEQ. The tract at residues 1–119 is disordered; the sequence is MSEAQETHVE…GRPPMHHRQE (119 aa). Serine 15 is modified (phosphoserine). A compositionally biased stretch (low complexity) spans 33–51; that stretch reads DAPQEPQVPQESAPQESAP. The span at 52 to 68 shows a compositional bias: pro residues; the sequence is QEPPAPQEQNDVPPPSN. A compositionally biased stretch (basic and acidic residues) spans 75 to 92; sequence EESHSVQDYQEAHQHHQP. Position 79 is a phosphoserine (serine 79). The segment covering 93-105 has biased composition (pro residues); that stretch reads PEPQPYYPPPPPG. RRM domains lie at 125–195 and 200–275; these read TRLF…YSKL and YRIT…RDDN. Serine 182, serine 212, and serine 224 each carry phosphoserine. Residues 269–299 form a disordered region; sequence TVERDDNPPPIRRSNRGGFRGRGGFRGGFRG. A compositionally biased stretch (gly residues) spans 286-299; it reads GFRGRGGFRGGFRG. A dimethylated arginine mark is found at arginine 288, arginine 290, arginine 294, and arginine 298. Residue arginine 302 is modified to Omega-N-methylarginine. A dimethylated arginine; alternate mark is found at arginine 307 and arginine 314. 2 positions are modified to omega-N-methylarginine; alternate: arginine 307 and arginine 314. Arginine 321, arginine 329, arginine 337, and arginine 344 each carry omega-N-methylarginine. Positions 343–414 are disordered; sequence SRGGYDSPRG…DAPRERSPTR (72 aa). Residues 346-360 are compositionally biased toward low complexity; that stretch reads GYDSPRGGYDSPRGG. Arginine 351 is modified (dimethylated arginine; alternate). Omega-N-methylarginine; alternate is present on arginine 351. Position 356 is a phosphoserine (serine 356). Residues arginine 358, arginine 363, arginine 377, and arginine 384 each carry the dimethylated arginine; alternate modification. 4 positions are modified to omega-N-methylarginine; alternate: arginine 358, arginine 363, arginine 377, and arginine 384. Residues 379-389 are compositionally biased toward gly residues; the sequence is SYGGSRGGYDG. Residue arginine 391 is modified to Omega-N-methylarginine. The span at 399-414 shows a compositional bias: basic and acidic residues; that stretch reads DAYRTRDAPRERSPTR.

It belongs to the RRM GAR family. In terms of assembly, interacts with RRP6. Methylated by HMT1. The methylation is required for nuclear export.

It is found in the cytoplasm. It localises to the nucleus. The protein localises to the stress granule. Functionally, involved in mRNA processing and export. Required for efficient splicing of a large set of pre-mRNAs by efficient co-transcriptional recruitment of the splicing machinery. Remains associated with the mRNP during early steps of translation elongation. The protein is Serine/arginine (SR)-type shuttling mRNA binding protein NPL3 of Saccharomyces cerevisiae (strain ATCC 204508 / S288c) (Baker's yeast).